The chain runs to 194 residues: dITP/XTP pyrophosphatase (194 aa).

Thr-8–Lys-13 lines the substrate pocket. Mg(2+) is bound by residues Glu-38 and Asp-67. The Proton acceptor role is filled by Asp-67. Residues Ser-68, Phe-146–Asp-149, Lys-169, and His-174–Arg-175 contribute to the substrate site.

The protein belongs to the HAM1 NTPase family. In terms of assembly, homodimer. Mg(2+) is required as a cofactor.

It catalyses the reaction XTP + H2O = XMP + diphosphate + H(+). It carries out the reaction dITP + H2O = dIMP + diphosphate + H(+). The enzyme catalyses ITP + H2O = IMP + diphosphate + H(+). Its function is as follows. Pyrophosphatase that catalyzes the hydrolysis of nucleoside triphosphates to their monophosphate derivatives, with a high preference for the non-canonical purine nucleotides XTP (xanthosine triphosphate), dITP (deoxyinosine triphosphate) and ITP. Seems to function as a house-cleaning enzyme that removes non-canonical purine nucleotides from the nucleotide pool, thus preventing their incorporation into DNA/RNA and avoiding chromosomal lesions. The sequence is that of dITP/XTP pyrophosphatase from Synechocystis sp. (strain ATCC 27184 / PCC 6803 / Kazusa).